The primary structure comprises 573 residues: Sulfite reductase [NADPH] hemoprotein beta-component (573 aa).

Residues Cys438, Cys444, Cys483, and Cys487 each coordinate [4Fe-4S] cluster. Residue Cys487 participates in siroheme binding.

The protein belongs to the nitrite and sulfite reductase 4Fe-4S domain family. As to quaternary structure, alpha(8)-beta(8). The alpha component is a flavoprotein, the beta component is a hemoprotein. It depends on siroheme as a cofactor. Requires [4Fe-4S] cluster as cofactor.

The catalysed reaction is hydrogen sulfide + 3 NADP(+) + 3 H2O = sulfite + 3 NADPH + 4 H(+). It participates in sulfur metabolism; hydrogen sulfide biosynthesis; hydrogen sulfide from sulfite (NADPH route): step 1/1. Functionally, component of the sulfite reductase complex that catalyzes the 6-electron reduction of sulfite to sulfide. This is one of several activities required for the biosynthesis of L-cysteine from sulfate. This Nitrosomonas europaea (strain ATCC 19718 / CIP 103999 / KCTC 2705 / NBRC 14298) protein is Sulfite reductase [NADPH] hemoprotein beta-component.